Reading from the N-terminus, the 115-residue chain is Superoxide reductase (115 aa).

6 residues coordinate Fe cation: Glu-14, His-16, His-41, His-47, Cys-102, and His-105.

The protein belongs to the desulfoferrodoxin family. Homotetramer. The cofactor is Fe cation.

The enzyme catalyses reduced [rubredoxin] + superoxide + 2 H(+) = oxidized [rubredoxin] + H2O2. Uses electrons from reduced NADP, by way of rubredoxin and an oxidoreductase, to catalyze the reduction of superoxide to hydrogen peroxide. This is Superoxide reductase (sorA) from Pyrococcus abyssi (strain GE5 / Orsay).